The following is a 239-amino-acid chain: tRNA (guanine-N(7)-)-methyltransferase (239 aa).

E69, E94, D121, and D144 together coordinate S-adenosyl-L-methionine. D144 is a catalytic residue. K148 contacts substrate. The interval 150–155 is interaction with RNA; the sequence is RHNKRR. Residues D180 and 217 to 220 contribute to the substrate site; that span reads TKFE.

The protein belongs to the class I-like SAM-binding methyltransferase superfamily. TrmB family. Monomer.

It catalyses the reaction guanosine(46) in tRNA + S-adenosyl-L-methionine = N(7)-methylguanosine(46) in tRNA + S-adenosyl-L-homocysteine. It participates in tRNA modification; N(7)-methylguanine-tRNA biosynthesis. Functionally, catalyzes the formation of N(7)-methylguanine at position 46 (m7G46) in tRNA. This chain is tRNA (guanine-N(7)-)-methyltransferase, found in Salmonella typhimurium (strain LT2 / SGSC1412 / ATCC 700720).